Consider the following 179-residue polypeptide: Large ribosomal subunit protein uL5c (179 aa).

It belongs to the universal ribosomal protein uL5 family. Part of the 50S ribosomal subunit; contacts the 5S rRNA.

It is found in the plastid. The protein resides in the chloroplast. Functionally, binds 5S rRNA, forms part of the central protuberance of the 50S subunit. This Gracilaria tenuistipitata var. liui (Red alga) protein is Large ribosomal subunit protein uL5c (rpl5).